Consider the following 602-residue polypeptide: Elongation factor 4 (602 aa).

The tr-type G domain occupies 6–188 (DHIRNFSIVA…AIVNKLPAPK (183 aa)). GTP-binding positions include 18-23 (DHGKST) and 135-138 (NKID).

It belongs to the TRAFAC class translation factor GTPase superfamily. Classic translation factor GTPase family. LepA subfamily.

The protein localises to the cell inner membrane. The catalysed reaction is GTP + H2O = GDP + phosphate + H(+). Functionally, required for accurate and efficient protein synthesis under certain stress conditions. May act as a fidelity factor of the translation reaction, by catalyzing a one-codon backward translocation of tRNAs on improperly translocated ribosomes. Back-translocation proceeds from a post-translocation (POST) complex to a pre-translocation (PRE) complex, thus giving elongation factor G a second chance to translocate the tRNAs correctly. Binds to ribosomes in a GTP-dependent manner. The polypeptide is Elongation factor 4 (Brucella suis (strain ATCC 23445 / NCTC 10510)).